A 266-amino-acid chain; its full sequence is Undecaprenyl-diphosphatase (266 aa).

8 helical membrane passes run Met1 to Ile21, Phe43 to Ile63, Ser83 to Phe103, Val114 to Phe134, Thr144 to Gly164, Ile186 to Ile206, Leu219 to Ile239, and Val245 to Ile265.

This sequence belongs to the UppP family.

The protein localises to the cell inner membrane. It carries out the reaction di-trans,octa-cis-undecaprenyl diphosphate + H2O = di-trans,octa-cis-undecaprenyl phosphate + phosphate + H(+). Catalyzes the dephosphorylation of undecaprenyl diphosphate (UPP). Confers resistance to bacitracin. This is Undecaprenyl-diphosphatase from Ruthia magnifica subsp. Calyptogena magnifica.